The primary structure comprises 475 residues: Fez family zinc finger protein 1 (475 aa).

The Engrailed homology 1 repressor signature appears at 28–43 (PLAFSIERIMARTPEP). 6 consecutive C2H2-type zinc fingers follow at residues 260-282 (FTCE…MPVH), 288-310 (FVCK…KIIH), 316-338 (HKCN…TRIH), 344-366 (FVCE…KLTH), 372-394 (FKCN…MHTH), and 400-423 (FTCP…RKLH). The disordered stretch occupies residues 428–475 (GLARTPAGEPGTEPPPPLPQQPPMTLPPLQPPLPTPGPLQPGLHQGHQ). Residues 439-466 (TEPPPPLPQQPPMTLPPLQPPLPTPGPL) are compositionally biased toward pro residues.

The protein belongs to the krueppel C2H2-type zinc-finger protein family. Expressed in brain. Little or no expression in other tissues. Overexpressed specifically in gastric cancers. A 2- to 20-fold increase is found in over 50% of gastric cancer tissues.

It localises to the nucleus. Functionally, transcription repressor. Involved in the axonal projection and proper termination of olfactory sensory neurons (OSN). Plays a role in rostro-caudal patterning of the diencephalon and in prethalamic formation. Expression is required in OSN to cell-autonomously regulate OSN axon projections. Regulates non-cell-autonomously the layer formation of the olfactory bulb development and the interneurons. May be required for correct rostral migration of the interneuron progenitors. The sequence is that of Fez family zinc finger protein 1 (FEZF1) from Homo sapiens (Human).